The chain runs to 710 residues: Prolyl endopeptidase (710 aa).

Met-1 is modified (N-acetylmethionine). An N6-acetyllysine modification is found at Lys-157. Catalysis depends on charge relay system residues Ser-554, Asp-641, and His-680.

The protein belongs to the peptidase S9A family. In terms of assembly, monomer. Post-translationally, the N-terminus is blocked.

The protein localises to the cytoplasm. It carries out the reaction Hydrolysis of Pro-|-Xaa &gt;&gt; Ala-|-Xaa in oligopeptides.. Cleaves peptide bonds on the C-terminal side of prolyl residues within peptides that are up to approximately 30 amino acids long. In Homo sapiens (Human), this protein is Prolyl endopeptidase (PREP).